We begin with the raw amino-acid sequence, 143 residues long: Nucleoside diphosphate kinase (143 aa).

Residues lysine 11, phenylalanine 59, arginine 87, threonine 93, arginine 104, and asparagine 114 each coordinate ATP. Histidine 117 acts as the Pros-phosphohistidine intermediate in catalysis.

This sequence belongs to the NDK family. As to quaternary structure, homotetramer. Requires Mg(2+) as cofactor.

It localises to the cytoplasm. It carries out the reaction a 2'-deoxyribonucleoside 5'-diphosphate + ATP = a 2'-deoxyribonucleoside 5'-triphosphate + ADP. It catalyses the reaction a ribonucleoside 5'-diphosphate + ATP = a ribonucleoside 5'-triphosphate + ADP. In terms of biological role, major role in the synthesis of nucleoside triphosphates other than ATP. The ATP gamma phosphate is transferred to the NDP beta phosphate via a ping-pong mechanism, using a phosphorylated active-site intermediate. This chain is Nucleoside diphosphate kinase, found in Stutzerimonas stutzeri (strain A1501) (Pseudomonas stutzeri).